The following is a 355-amino-acid chain: Dihydroorotate dehydrogenase (quinone) (355 aa).

FMN contacts are provided by residues 68-72 (AGFDK) and threonine 92. Lysine 72 serves as a coordination point for substrate. 117–121 (NRMGF) is a binding site for substrate. Positions 154 and 190 each coordinate FMN. Position 190 (asparagine 190) interacts with substrate. Residue serine 193 is the Nucleophile of the active site. Asparagine 195 contacts substrate. Lysine 232 and threonine 260 together coordinate FMN. 261-262 (NT) lines the substrate pocket. FMN contacts are provided by residues glycine 286, glycine 315, and 336-337 (YS).

The protein belongs to the dihydroorotate dehydrogenase family. Type 2 subfamily. In terms of assembly, monomer. Requires FMN as cofactor.

The protein localises to the cell membrane. It carries out the reaction (S)-dihydroorotate + a quinone = orotate + a quinol. It functions in the pathway pyrimidine metabolism; UMP biosynthesis via de novo pathway; orotate from (S)-dihydroorotate (quinone route): step 1/1. In terms of biological role, catalyzes the conversion of dihydroorotate to orotate with quinone as electron acceptor. This chain is Dihydroorotate dehydrogenase (quinone), found in Nocardioides sp. (strain ATCC BAA-499 / JS614).